We begin with the raw amino-acid sequence, 244 residues long: ATP synthase subunit a (244 aa).

A run of 7 helical transmembrane segments spans residues 20–40 (FFDVSITTITVYLGLLMVIVI), 81–101 (GILFFPFIMSLFLFVLTLNVM), 113–133 (QLLVTFTLAITIMIGITIWGF), 140–160 (FLNIFVPSGIEPWLLPLLVFI), 176–196 (LFANMLAGHLLIHIIGVAAIY), 202–222 (FIGILPWICVIAFMFLELGIA), and 223–243 (FLQAYVFVLLTLIYIANIINL).

The protein belongs to the ATPase A chain family. F-type ATPases have 2 components, CF(1) - the catalytic core - and CF(0) - the membrane proton channel. CF(1) has five subunits: alpha(3), beta(3), gamma(1), delta(1), epsilon(1). CF(0) has three main subunits: a, b and c.

The protein resides in the mitochondrion inner membrane. Functionally, mitochondrial membrane ATP synthase (F(1)F(0) ATP synthase or Complex V) produces ATP from ADP in the presence of a proton gradient across the membrane which is generated by electron transport complexes of the respiratory chain. F-type ATPases consist of two structural domains, F(1) - containing the extramembraneous catalytic core and F(0) - containing the membrane proton channel, linked together by a central stalk and a peripheral stalk. During catalysis, ATP synthesis in the catalytic domain of F(1) is coupled via a rotary mechanism of the central stalk subunits to proton translocation. Key component of the proton channel; it may play a direct role in the translocation of protons across the membrane. This Dictyostelium citrinum (Slime mold) protein is ATP synthase subunit a (atp6).